The sequence spans 140 residues: Active regulator of SIRT1 (140 aa).

Disordered regions lie at residues 1–52 (MSAS…KNKA) and 95–123 (QQVL…EGTV). Positions 108-120 (DRPAEKKEKKKPE) are enriched in basic and acidic residues.

This sequence belongs to the AROS family. Part of the small subunit (SSU) processome, composed of more than 70 proteins and the RNA chaperone small nucleolar RNA (snoRNA) U3.

Its subcellular location is the nucleus. The protein resides in the nucleolus. Part of the small subunit (SSU) processome, first precursor of the small eukaryotic ribosomal subunit. During the assembly of the SSU processome in the nucleolus, many ribosome biogenesis factors, an RNA chaperone and ribosomal proteins associate with the nascent pre-rRNA and work in concert to generate RNA folding, modifications, rearrangements and cleavage as well as targeted degradation of pre-ribosomal RNA by the RNA exosome. Acts as a chaperone that specifically mediates the integration of RPS19 in state post-A1. Direct regulator of SIRT1. The protein is Active regulator of SIRT1 (RPS19BP1) of Gallus gallus (Chicken).